A 93-amino-acid polypeptide reads, in one-letter code: Small integral membrane protein 36 (93 aa).

A helical transmembrane segment spans residues leucine 14–leucine 34. The tract at residues proline 73–valine 93 is disordered.

The protein resides in the membrane. The polypeptide is Small integral membrane protein 36 (Homo sapiens (Human)).